Reading from the N-terminus, the 173-residue chain is Large ribosomal subunit protein uL10 (173 aa).

The protein belongs to the universal ribosomal protein uL10 family. Part of the ribosomal stalk of the 50S ribosomal subunit. The N-terminus interacts with L11 and the large rRNA to form the base of the stalk. The C-terminus forms an elongated spine to which L12 dimers bind in a sequential fashion forming a multimeric L10(L12)X complex.

Forms part of the ribosomal stalk, playing a central role in the interaction of the ribosome with GTP-bound translation factors. The sequence is that of Large ribosomal subunit protein uL10 from Myxococcus xanthus (strain DK1622).